A 209-amino-acid polypeptide reads, in one-letter code: ATP-dependent Clp protease proteolytic subunit (209 aa).

Catalysis depends on serine 106, which acts as the Nucleophile. The active site involves histidine 131.

Belongs to the peptidase S14 family. In terms of assembly, fourteen ClpP subunits assemble into 2 heptameric rings which stack back to back to give a disk-like structure with a central cavity, resembling the structure of eukaryotic proteasomes.

Its subcellular location is the cytoplasm. It carries out the reaction Hydrolysis of proteins to small peptides in the presence of ATP and magnesium. alpha-casein is the usual test substrate. In the absence of ATP, only oligopeptides shorter than five residues are hydrolyzed (such as succinyl-Leu-Tyr-|-NHMec, and Leu-Tyr-Leu-|-Tyr-Trp, in which cleavage of the -Tyr-|-Leu- and -Tyr-|-Trp bonds also occurs).. Cleaves peptides in various proteins in a process that requires ATP hydrolysis. Has a chymotrypsin-like activity. Plays a major role in the degradation of misfolded proteins. This Brucella melitensis biotype 2 (strain ATCC 23457) protein is ATP-dependent Clp protease proteolytic subunit.